A 198-amino-acid chain; its full sequence is B9 domain-containing protein 1 (198 aa).

Residues 8-126 (FLLNVSGQIE…TIPMFVPESS (119 aa)) form the C2 B9-type domain.

This sequence belongs to the B9D family. As to quaternary structure, part of the tectonic-like complex (also named B9 complex).

It localises to the cytoplasm. The protein localises to the cytoskeleton. It is found in the cilium basal body. Component of the tectonic-like complex, a complex localized at the transition zone of primary cilia and acting as a barrier that prevents diffusion of transmembrane proteins between the cilia and plasma membranes. Required for ciliogenesis and sonic hedgehog/SHH signaling. This chain is B9 domain-containing protein 1 (b9d1), found in Xenopus laevis (African clawed frog).